The chain runs to 253 residues: Imidazole glycerol phosphate synthase subunit HisF (253 aa).

Catalysis depends on residues aspartate 11 and aspartate 130.

It belongs to the HisA/HisF family. Heterodimer of HisH and HisF.

The protein localises to the cytoplasm. The catalysed reaction is 5-[(5-phospho-1-deoxy-D-ribulos-1-ylimino)methylamino]-1-(5-phospho-beta-D-ribosyl)imidazole-4-carboxamide + L-glutamine = D-erythro-1-(imidazol-4-yl)glycerol 3-phosphate + 5-amino-1-(5-phospho-beta-D-ribosyl)imidazole-4-carboxamide + L-glutamate + H(+). Its pathway is amino-acid biosynthesis; L-histidine biosynthesis; L-histidine from 5-phospho-alpha-D-ribose 1-diphosphate: step 5/9. Its function is as follows. IGPS catalyzes the conversion of PRFAR and glutamine to IGP, AICAR and glutamate. The HisF subunit catalyzes the cyclization activity that produces IGP and AICAR from PRFAR using the ammonia provided by the HisH subunit. This chain is Imidazole glycerol phosphate synthase subunit HisF, found in Gluconobacter oxydans (strain 621H) (Gluconobacter suboxydans).